The chain runs to 287 residues: Acetylglutamate kinase (287 aa).

Substrate is bound by residues 64–65, Arg-86, and Asn-181; that span reads GG.

This sequence belongs to the acetylglutamate kinase family. ArgB subfamily.

It localises to the cytoplasm. It catalyses the reaction N-acetyl-L-glutamate + ATP = N-acetyl-L-glutamyl 5-phosphate + ADP. It functions in the pathway amino-acid biosynthesis; L-arginine biosynthesis; N(2)-acetyl-L-ornithine from L-glutamate: step 2/4. Catalyzes the ATP-dependent phosphorylation of N-acetyl-L-glutamate. The sequence is that of Acetylglutamate kinase from Desulforamulus reducens (strain ATCC BAA-1160 / DSM 100696 / MI-1) (Desulfotomaculum reducens).